A 458-amino-acid chain; its full sequence is Argininosuccinate lyase (458 aa).

Belongs to the lyase 1 family. Argininosuccinate lyase subfamily.

Its subcellular location is the cytoplasm. It carries out the reaction 2-(N(omega)-L-arginino)succinate = fumarate + L-arginine. Its pathway is amino-acid biosynthesis; L-arginine biosynthesis; L-arginine from L-ornithine and carbamoyl phosphate: step 3/3. This Haemophilus ducreyi (strain 35000HP / ATCC 700724) protein is Argininosuccinate lyase.